The primary structure comprises 148 residues: Protein TIFY 5B (148 aa).

One can recognise a Tify domain in the interval 54 to 89; the sequence is PKQESQILTIFYNGHMCVSSDLTHLEANAILSLASR.

This sequence belongs to the TIFY/JAZ family. Post-translationally, ubiquitinated. Targeted for degradation by the SCF(COI1) E3 ubiquitin ligase-proteasome pathway during jasmonate signaling.

The protein resides in the nucleus. Repressor of jasmonate responses. The protein is Protein TIFY 5B (TIFY 5B) of Arabidopsis thaliana (Mouse-ear cress).